Consider the following 551-residue polypeptide: Protein ROOT HAIR SPECIFIC 17 (551 aa).

A helical; Signal-anchor for type II membrane protein transmembrane segment spans residues 39–59 (LFPLVSAVSGCLLLILFSFST). Asn-109 and Asn-153 each carry an N-linked (GlcNAc...) asparagine glycan. Substrate is bound at residue 293-295 (HLR). N-linked (GlcNAc...) asparagine glycans are attached at residues Asn-405 and Asn-465. Residues 515–539 (KAKHVNEDDSSEYSEIGNVPISSRS) form a disordered region.

The protein belongs to the glycosyltransferase GT106 family. In terms of tissue distribution, specifically expressed in the root hair.

It localises to the membrane. It functions in the pathway glycan metabolism. The sequence is that of Protein ROOT HAIR SPECIFIC 17 from Arabidopsis thaliana (Mouse-ear cress).